Consider the following 104-residue polypeptide: Pyrimidine/purine nucleoside phosphorylase (104 aa).

Belongs to the nucleoside phosphorylase PpnP family.

It carries out the reaction a purine D-ribonucleoside + phosphate = a purine nucleobase + alpha-D-ribose 1-phosphate. The catalysed reaction is adenosine + phosphate = alpha-D-ribose 1-phosphate + adenine. It catalyses the reaction cytidine + phosphate = cytosine + alpha-D-ribose 1-phosphate. The enzyme catalyses guanosine + phosphate = alpha-D-ribose 1-phosphate + guanine. It carries out the reaction inosine + phosphate = alpha-D-ribose 1-phosphate + hypoxanthine. The catalysed reaction is thymidine + phosphate = 2-deoxy-alpha-D-ribose 1-phosphate + thymine. It catalyses the reaction uridine + phosphate = alpha-D-ribose 1-phosphate + uracil. The enzyme catalyses xanthosine + phosphate = alpha-D-ribose 1-phosphate + xanthine. Catalyzes the phosphorolysis of diverse nucleosides, yielding D-ribose 1-phosphate and the respective free bases. Can use uridine, adenosine, guanosine, cytidine, thymidine, inosine and xanthosine as substrates. Also catalyzes the reverse reactions. The protein is Pyrimidine/purine nucleoside phosphorylase of Geobacter metallireducens (strain ATCC 53774 / DSM 7210 / GS-15).